We begin with the raw amino-acid sequence, 310 residues long: 2-ketogluconate reductase (310 aa).

Residues 151–152 and 227–229 each bind NADP(+); these read HI and IAR. Catalysis depends on residues Arg-229 and Glu-258. His-276 serves as the catalytic Proton donor.

Belongs to the D-isomer specific 2-hydroxyacid dehydrogenase family. Homohexamer.

It catalyses the reaction D-gluconate + NADP(+) = 2-dehydro-D-gluconate + NADPH + H(+). In terms of biological role, catalyzes the reduction of 2-keto-D-gluconate to gluconate. Can also catalyze the reduction of 2-keto-L-gulonate. Can use both NADH and NADPH efficiently, with a slight preference for NADPH. The polypeptide is 2-ketogluconate reductase (Gluconobacter oxydans (strain 621H) (Gluconobacter suboxydans)).